Here is a 74-residue protein sequence, read N- to C-terminus: Somatostatin-2 (74 aa).

A propeptide spanning residues 1–46 (ARGAGLLSQDWSAVEDLLAQMSLPEADAQREAEVVSVATGGRLNLE) is cleaved from the precursor. An intrachain disulfide couples Cys-63 to Cys-74.

Belongs to the somatostatin family.

It is found in the secreted. Functionally, somatostatin inhibits the release of somatotropin. The chain is Somatostatin-2 (sst2) from Myoxocephalus scorpius (Shorthorn sculpin).